The following is a 352-amino-acid chain: Phospho-N-acetylmuramoyl-pentapeptide-transferase (352 aa).

Helical transmembrane passes span 16-36, 66-86, 88-108, 129-149, 160-180, 191-211, 228-248, 255-275, 280-300, and 329-349; these read YITF…LLFM, TPTM…LLCA, LNNL…LIGL, MLYL…FGME, PLLS…VATS, GLAT…VYIA, SGEA…FLWF, LFMG…MAII, FLLF…ILQI, and KIIV…LLTL.

It belongs to the glycosyltransferase 4 family. MraY subfamily. Mg(2+) serves as cofactor.

It localises to the cell inner membrane. It catalyses the reaction UDP-N-acetyl-alpha-D-muramoyl-L-alanyl-gamma-D-glutamyl-meso-2,6-diaminopimeloyl-D-alanyl-D-alanine + di-trans,octa-cis-undecaprenyl phosphate = di-trans,octa-cis-undecaprenyl diphospho-N-acetyl-alpha-D-muramoyl-L-alanyl-D-glutamyl-meso-2,6-diaminopimeloyl-D-alanyl-D-alanine + UMP. It functions in the pathway cell wall biogenesis; peptidoglycan biosynthesis. Functionally, catalyzes the initial step of the lipid cycle reactions in the biosynthesis of the cell wall peptidoglycan: transfers peptidoglycan precursor phospho-MurNAc-pentapeptide from UDP-MurNAc-pentapeptide onto the lipid carrier undecaprenyl phosphate, yielding undecaprenyl-pyrophosphoryl-MurNAc-pentapeptide, known as lipid I. The sequence is that of Phospho-N-acetylmuramoyl-pentapeptide-transferase from Wolinella succinogenes (strain ATCC 29543 / DSM 1740 / CCUG 13145 / JCM 31913 / LMG 7466 / NCTC 11488 / FDC 602W) (Vibrio succinogenes).